We begin with the raw amino-acid sequence, 398 residues long: Energy-coupling factor transporter ATP-binding protein EcfA2 (398 aa).

One can recognise an ABC transporter domain in the interval 5 to 240 (IELKDLEYAY…KELVRRARLK (236 aa)). 38 to 45 (GSNGAGKS) contributes to the ATP binding site.

The protein belongs to the ABC transporter superfamily. Energy-coupling factor EcfA family. In terms of assembly, forms a stable energy-coupling factor (ECF) transporter complex composed of 2 membrane-embedded substrate-binding proteins (S component), 2 ATP-binding proteins (A component) and 2 transmembrane proteins (T component).

It is found in the cell membrane. Its function is as follows. ATP-binding (A) component of a common energy-coupling factor (ECF) ABC-transporter complex. Unlike classic ABC transporters this ECF transporter provides the energy necessary to transport a number of different substrates. This chain is Energy-coupling factor transporter ATP-binding protein EcfA2, found in Methanospirillum hungatei JF-1 (strain ATCC 27890 / DSM 864 / NBRC 100397 / JF-1).